Consider the following 112-residue polypeptide: Replication initiation control protein YabA (112 aa).

Zn(2+)-binding residues include His85, Cys87, Cys101, and Cys104.

The protein belongs to the YabA family. As to quaternary structure, homotetramer. Interacts with both DnaA and DnaN, acting as a bridge between these two proteins. Zn(2+) serves as cofactor.

The protein resides in the cytoplasm. It is found in the nucleoid. Involved in control of chromosome replication initiation. Inhibits the cooperative binding of DnaA to the oriC region, thus negatively regulating initiation of chromosome replication. Inhibits the ability of DnaA-ATP to form a helix on DNA; does not disassemble preformed DnaA-DNA helices. Decreases the residence time of DnaA on the chromosome at its binding sites (oriC, replication forks and promoter-binding sites). Tethers DnaA to the replication machinery via the DNA polymerase beta sliding clamp subunit (dnaN). Associates with oriC and other DnaA targets on the chromosome in a DnaA-dependent manner. This Lacticaseibacillus casei (strain BL23) (Lactobacillus casei) protein is Replication initiation control protein YabA.